The primary structure comprises 3014 residues: Genome polyprotein (3014 aa).

Ser2 carries the post-translational modification N-acetylserine; by host. The interval 2–23 (STNPKPQRKTKRNTNRRPQDVK) is interaction with STAT1. Residues 2-58 (STNPKPQRKTKRNTNRRPQDVKFPGGGQIVGGVYLLPRRGPKLGVRATRKNSERSQP) are interaction with EIF2AK2/PKR. The interval 2 to 59 (STNPKPQRKTKRNTNRRPQDVKFPGGGQIVGGVYLLPRRGPKLGVRATRKNSERSQPR) is interaction with DDX3X. A disordered region spans residues 2–75 (STNPKPQRKT…PKARRPTGRS (74 aa)). Residues 2–168 (STNPKPQRKT…EDGINYATGN (167 aa)) are Cytoplasmic-facing. 2 short sequence motifs (nuclear localization signal) span residues 5-13 (PKPQRKTKR) and 38-43 (PRRGPK). Basic residues predominate over residues 7 to 16 (PQRKTKRNTN). The residue at position 53 (Ser53) is a Phosphoserine; by host. Short sequence motifs (nuclear localization signal) lie at residues 58 to 64 (PRGRRQP) and 66 to 71 (PKARRP). Residues 58–72 (PRGRRQPIPKARRPT) are compositionally biased toward basic residues. Residues Ser99 and Ser116 each carry the phosphoserine; by host modification. Positions 112-152 (PRRKSPNLGRVIHTLTCGFPHLMGYIPLVGGPVGGVSRALA) are important for endoplasmic reticulum and mitochondrial localization. Residues 122-173 (VIHTLTCGFPHLMGYIPLVGGPVGGVSRALAHGVKVLEDGINYATGNLPGCP) form an interaction with APOA2 region. The tract at residues 164–167 (YATG) is important for lipid droplets localization. The helical transmembrane segment at 169–189 (LPGCPFSIFVLALLWCLTVPA) threads the bilayer. A propeptide spans 178-191 (VLALLWCLTVPASA) (ER anchor for the core protein, removed in mature form by host signal peptidase). The Lumenal portion of the chain corresponds to 190–358 (SAVPYRNASG…AGGHWGVLLA (169 aa)). N-linked (GlcNAc...) asparagine; by host glycosylation is found at Asn196, Asn209, and Asn234. The tract at residues 265–296 (LAGGAAFCSALYVGDACGALSLVGQMFTYKPR) is important for fusion. Asn305 carries N-linked (GlcNAc...) asparagine; by host glycosylation. A helical membrane pass occupies residues 359 to 379 (AAYFASTANWAKVILVLFLFA). Residues 380-726 (GVDGRTHTVG…WEYIMLVFLL (347 aa)) are Lumenal-facing. The tract at residues 385-412 (THTVGGTVGQGLKSLTSFFNPGPQRQLQ) is HVR1. 3 N-linked (GlcNAc...) (high mannose) asparagine; by host glycosylation sites follow: Asn417, Asn423, and Asn430. Cystine bridges form between Cys429–Cys553, Cys452–Cys459, Cys487–Cys495, and Cys504–Cys509. Asn448 carries an N-linked (GlcNAc...) asparagine; by host glycan. The HVR2 stretch occupies residues 475–479 (ATISG). The segment at 481–494 (SDDKPYCWHYPPRP) is CD81-binding 1. N-linked (GlcNAc...) asparagine; by host glycosylation is present at Asn533. A CD81-binding 2 region spans residues 545 to 552 (PPAGNWFG). An N-linked (GlcNAc...) asparagine; by host glycan is attached at Asn557. Cys565 and Cys570 are oxidised to a cystine. A glycan (N-linked (GlcNAc...) asparagine; by host) is linked at Asn578. 3 cysteine pairs are disulfide-bonded: Cys582-Cys586, Cys598-Cys621, and Cys608-Cys645. N-linked (GlcNAc...) (high mannose) asparagine; by host glycans are attached at residues Asn624 and Asn646. Cysteines 653 and 678 form a disulfide. The tract at residues 661–672 (AELSPLLHTTTQ) is PKR/eIF2-alpha phosphorylation homology domain (PePHD). A helical transmembrane segment spans residues 727–747 (LADARICTCLLILLLICQAEA). The Lumenal segment spans residues 748–758 (TCKNVIVLNAA). The helical transmembrane segment at 759-779 (AAAGNHGFFWGLLVVCLAWHV) threads the bilayer. The Cytoplasmic segment spans residues 780 to 783 (KGRL). Residues 784-804 (VPGATYLCLGVWPLLLVRLLR) form a helical membrane-spanning segment. Residues 805-814 (PHRALALDSS) are Lumenal-facing. A helical transmembrane segment spans residues 815 to 835 (DGGTVGCLVLIVLTIFTLTPG). Topologically, residues 836–882 (YKKKVVLVMWWLQYFIARVEAIIHVWVPPLQVKGGRDAVIMLTCLFH) are cytoplasmic. The helical transmembrane segment at 883 to 903 (PALGFEITKILFGILGPLYLL) threads the bilayer. The Lumenal segment spans residues 904 to 929 (QHSLTKVPYFLRARALLRLCLLAKHL). One can recognise a Peptidase C18 domain in the interval 904–1027 (QHSLTKVPYF…DIKTSGWRLL (124 aa)). Residues 905–1207 (HSLTKVPYFL…PVENLETTMR (303 aa)) form a protease NS2-3 region. The S-palmitoyl cysteine; by host moiety is linked to residue Cys923. A helical transmembrane segment spans residues 930–950 (VYGKYVQAALLHLGRLTGTYI). Residues 930 to 950 (VYGKYVQAALLHLGRLTGTYI) form an interaction with host SCPS1 region. At 951 to 1658 (YDHLAPMKDW…CMSADLEVIT (708 aa)) the chain is on the cytoplasmic side. Residues His953, Glu973, and Cys994 each act as for protease NS2 activity; shared with dimeric partner in the active site. The region spanning 1028-1209 (APITAYAQQT…ENLETTMRSP (182 aa)) is the Peptidase S29 domain. Residues His1084 and Asp1108 each act as charge relay system; for serine protease NS3 activity in the active site. Cys1124 and Cys1126 together coordinate Zn(2+). The Charge relay system; for serine protease NS3 activity role is filled by Ser1166. Zn(2+) is bound by residues Cys1172 and His1176. Positions 1218–1351 (PAVPHEFQVG…ARLVVLATAI (134 aa)) constitute a Helicase ATP-binding domain. 1231–1238 (APTGSGKS) provides a ligand contact to ATP. Residues Ser1238 and Glu1318 each contribute to the Mg(2+) site. The short motif at 1317-1320 (DECH) is the DECH box element. The region spanning 1362–1539 (NIEEVALPSE…DLTPAETTVR (178 aa)) is the Helicase C-terminal domain. Residues 1487–1499 (QRRGRTGRGRHGI) form an RNA-binding region. Residues 1659-1679 (STWVLVGGVVAALAAYCLTVG) form a helical membrane-spanning segment. The segment at 1680 to 1691 (SVAIVGRIILSG) is NS3-binding. The Cytoplasmic segment spans residues 1680–1806 (SVAIVGRIIL…AVTSPLTTHQ (127 aa)). The helical transmembrane segment at 1807–1827 (TLLFNILGGWVASQIAPPTAA) threads the bilayer. Residues 1828–1829 (TA) lie on the Lumenal side of the membrane. A helical transmembrane segment spans residues 1830 to 1850 (FVVSGMAGAAVGNIGLGRVLI). Position 1851 (Asp1851) is a topological domain, cytoplasmic. A helical transmembrane segment spans residues 1852 to 1872 (ILAGYGTGVAGALVAFKIMCG). The Lumenal segment spans residues 1873–1882 (ERPTAEELVN). A helical transmembrane segment spans residues 1883–1903 (LLPSILCPGALVVGVICAAVL). At 1904–1973 (RRHIGPGEGA…WIGEDYSTPC (70 aa)) the chain is on the cytoplasmic side. Cys1973 carries the S-palmitoyl cysteine; by host lipid modification. The stretch at 1974-2003 (DGTWLRAIWDWVCTALTDFKAWLQAKLLPQ) is an intramembrane region. Over 2004-2993 (LPGVPFFSCQ…YHSMSRARPR (990 aa)) the chain is Cytoplasmic. Residues Cys2012, Cys2030, Cys2032, and Cys2053 each coordinate Zn(2+). The tract at residues 2121 to 2209 (EFFTELDGVR…ANSSASQLSA (89 aa)) is FKBP8-binding. Residues 2121 to 2334 (EFFTELDGVR…VPLPRRKRKP (214 aa)) form a transcriptional activation region. The interaction with non-structural protein 4A stretch occupies residues 2136 to 2140 (PPCNP). An interaction with host SKP2 region spans residues 2190–2441 (RLNRGSPPSL…ALITPCSAEE (252 aa)). A phosphoserine; by host mark is found at Ser2195, Ser2198, Ser2202, Ser2205, Ser2208, and Ser2211. An ISDR region spans residues 2211 to 2250 (SLKATCTIQGHHPDADLIKANLLWRQCMGGNITRVEAENK). Residues 2211-2276 (SLKATCTIQG…REISVSADCF (66 aa)) are interaction with EIF2AK2/PKR. An NS4B-binding region spans residues 2250-2307 (KVEILDCFKPLKEEEDDREISVSADCFKKGPAFPPALPVWARPGYDPPLLETWKRPDY). The tract at residues 2300-2378 (ETWKRPDYDP…GTSSQHDSGP (79 aa)) is V3. Disordered stretches follow at residues 2315–2342 (CPIPPAGPPPVPLPRRKRKPMELSDSTV) and 2359–2412 (PSIE…GSWS). Residues 2316–2327 (PIPPAGPPPVPL) are compositionally biased toward pro residues. The SH3-binding signature appears at 2323–2326 (PPVP). Positions 2328–2337 (PRRKRKPMEL) match the Nuclear localization signal motif. Polar residues predominate over residues 2361 to 2375 (IEGQDSALGTSSQHD). The span at 2376-2385 (SGPEEKRDDN) shows a compositional bias: basic and acidic residues. The residue at position 2465 (Ser2465) is a Phosphoserine; by host. A RdRp catalytic domain is found at 2637–2755 (PMAFSYDTRC…ICESQGTHED (119 aa)). Residues Asp2643, Asp2741, and Asp2742 each coordinate Mg(2+). A helical membrane pass occupies residues 2994–3014 (NLLLCLLLLSVGVGIFLLPAR).

This sequence belongs to the hepacivirus polyprotein family. Homooligomer. Interacts with E1 (via C-terminus). Interacts with the non-structural protein 5A. Interacts (via N-terminus) with host STAT1 (via SH2 domain); this interaction results in decreased STAT1 phosphorylation and ubiquitin-mediated proteasome-dependent STAT1 degradation, leading to decreased IFN-stimulated gene transcription. Interacts with host STAT3; this interaction constitutively activates STAT3. Interacts with host LTBR receptor. Interacts with host TNFRSF1A receptor and possibly induces apoptosis. Interacts with host HNRPK. Interacts with host YWHAE. Interacts with host UBE3A/E6AP. Interacts with host DDX3X. Interacts with host APOA2. Interacts with host RXRA protein. Interacts with host SP110 isoform 3/Sp110b; this interaction sequesters the transcriptional corepressor SP110 away from the nucleus. Interacts with host CREB3 nuclear transcription protein; this interaction triggers cell transformation. Interacts with host ACY3. Interacts with host C1QR1. Interacts with host RBM24; this interaction, which enhances the interaction of the mature core protein with 5'-UTR, may inhibit viral translation and favor replication. Interacts with host EIF2AK2/PKR; this interaction induces the autophosphorylation of EIF2AK2. Part of the viral assembly initiation complex composed of NS2, E1, E2, NS3, NS4A, NS5A and the mature core protein. As to quaternary structure, forms a heterodimer with envelope glycoprotein E2. Interacts with mature core protein. Interacts with protease NS2. The heterodimer E1/E2 interacts with host CLDN1; this interaction plays a role in viral entry into host cell. Interacts with host SPSB2 (via C-terminus). Part of the viral assembly initiation complex composed of NS2, E1, E2, NS3, NS4A, NS5A and the mature core protein. Interacts with host NEURL3; this interaction prevents E1 binding to glycoprotein E2. In terms of assembly, forms a heterodimer with envelope glycoprotein E1. Interacts with host CD81 and SCARB1 receptors; these interactions play a role in viral entry into host cell. Interacts with host EIF2AK2/PKR; this interaction inhibits EIF2AK2 and probably allows the virus to evade the innate immune response. Interacts with host CD209/DC-SIGN and CLEC4M/DC-SIGNR. Interact with host SPCS1; this interaction is essential for viral particle assembly. Interacts with protease NS2. The heterodimer E1/E2 interacts with host CLDN1; this interaction plays a role in viral entry into host cell. Part of the viral assembly initiation complex composed of NS2, E1, E2, NS3, NS4A, NS5A and the mature core protein. Interacts with host SLC3A2/4F2hc; the interaction may facilitate viral entry into host cell. Interacts with human PLSCR1. Homohexamer. Homoheptamer. Interacts with protease NS2. As to quaternary structure, homodimer. Interacts with host SPCS1; this interaction is essential for viral particle assembly. Interacts with envelope glycoprotein E1. Interacts with envelope glycoprotein E2. Interacts with viroporin p7. Interacts with serine protease/helicase NS3. Part of the replication complex composed of NS2, NS3, NS4A, NS4B, NS5A and the RNA-directed RNA polymerase embedded in an ER-derived membranous web. Part of the viral assembly initiation complex composed of NS2, E1, E2, NS3, NS4A, NS5A and the mature core protein. In terms of assembly, interacts with protease NS2. Interacts with non-structural protein 4A; this interaction stabilizes the folding of NS3 serine protease. NS3-NS4A interaction is essential for NS3 activation and allows membrane anchorage of the latter. NS3/NS4A complex also prevents phosphorylation of host IRF3, thus preventing the establishment of dsRNA induced antiviral state. Interacts with host MAVS; this interaction leads to the cleavage and inhibition of host MAVS. Interacts with host TICAM1; this interaction leads to the cleavage and inhibition of host TICAM1. Interacts with host TANK-binding kinase/TBK1; this interaction results in the inhibition of the association between TBK1 and IRF3, which leads to the inhibition of IRF3 activation. Interacts with host RBM24. Part of the replication complex composed of NS2, NS3, NS4A, NS4B, NS5A and the RNA-directed RNA polymerase embedded in an ER-derived membranous web. Part of the viral assembly initiation complex composed of NS2, E1, E2, NS3, NS4A, NS5A and the mature core protein. Interacts with NS3 serine protease; this interaction stabilizes the folding of NS3 serine protease. NS3-NS4A interaction is essential for NS3 activation and allows membrane anchorage of the latter. Interacts with non-structural protein 5A (via N-terminus). Part of the replication complex composed of NS2, NS3, NS4A, NS4B, NS5A and the RNA-directed RNA polymerase embedded in an ER-derived membranous web. Part of the viral assembly initiation complex composed of NS2, E1, E2, NS3, NS4A, NS5A and the mature core protein. As to quaternary structure, homomultimer. Interacts with non-structural protein NS5A. Interacts with host PLA2G4C; this interaction likely initiates the recruitment of replication complexes to lipid droplets. Interacts with host STING; this interaction disrupts the interaction between STING and TBK1 thereby suppressing the interferon signaling. Part of the replication complex composed of NS2, NS3, NS4A, NS4B, NS5A and the RNA-directed RNA polymerase embedded in an ER-derived membranous web. In terms of assembly, monomer. Homodimer; dimerization is required for RNA-binding. Interacts with the mature core protein. Interacts (via N-terminus) with non-structural protein 4A. Interacts with non-structural protein 4B. Interacts (via region D2) with RNA-directed RNA polymerase. Part of the viral assembly initiation complex composed of NS2, E1, E2, NS3, NS4A, NS5A and the mature core protein. Part of the replication complex composed of NS2, NS3, NS4A, NS4B, NS5A and the RNA-directed RNA polymerase embedded in an ER-derived membranous web. Interacts with host GRB2. Interacts with host BIN1. Interacts with host PIK3R1. Interacts with host SRCAP. Interacts with host FKBP8. Interacts (via C-terminus) with host VAPB (via MSP domain). Interacts with host EIF2AK2/PKR; this interaction leads to disruption of EIF2AK2 dimerization by NS5A and probably allows the virus to evade the innate immune response. Interacts (via N-terminus) with host PACSIN2 (via N-terminus); this interaction attenuates protein kinase C alpha-mediated phosphorylation of PACSIN2 by disrupting the interaction between PACSIN2 and PRKCA. Interacts (via N-terminus) with host SRC kinase (via SH2 domain). Interacts with most Src-family kinases. Interacts with host IFI27 and SKP2; promotes the ubiquitin-mediated proteasomal degradation of NS5A. Interacts with host GPS2. Interacts with host TNFRSF21; this interaction allows the modulation by the virus of JNK, p38 MAPK, STAT3, and Akt signaling pathways in a DR6-dependent manner. Interacts (via N-terminus) with host CIDEB (via N-terminus); this interaction seems to regulate the association of HCV particles with APOE. Interacts with host CHKA/Choline Kinase-alpha; CHKA bridges host PI4KA and NS5A and potentiates NS5A-stimulated PI4KA activity, which then facilitates the targeting of the ternary complex to the ER for viral replication. Interacts with host SPSB2 (via C-terminus); this interaction targets NS5A for ubiquitination and degradation. Interacts with host RAB18; this interaction may promote the association of NS5A and other replicase components with lipid droplets. Interacts (via region D2) with host PPIA/CYPA; the interaction stimulates RNA-binding ability of NS5A and is dependent on the peptidyl-prolyl cis-trans isomerase activity of PPIA/CYPA. Interacts with host TRIM14; this interaction induces the degradation of NS5A. Homooligomer. Interacts with non-structural protein 5A. Interacts with host VAPB. Interacts with host PRK2/PKN2. Interacts with host HNRNPA1 and SEPT6; these interactions facilitate viral replication. Part of the replication complex composed of NS2, NS3, NS4A, NS4B, NS5A and the RNA-directed RNA polymerase. Requires Zn(2+) as cofactor. Mg(2+) is required as a cofactor. Specific enzymatic cleavages in vivo yield mature proteins. The structural proteins, core, E1, E2 and p7 are produced by proteolytic processing by host signal peptidases. The core protein precursor is synthesized as a 23 kDa, which is retained in the ER membrane through the hydrophobic signal peptide. Cleavage by the signal peptidase releases the 21 kDa mature core protein. The cleavage of the core protein precursor occurs between aminoacids 176 and 188 but the exact cleavage site is not known. Some degraded forms of the core protein appear as well during the course of infection. The other proteins (p7, NS2, NS3, NS4A, NS4B, NS5A and NS5B) are cleaved by the viral proteases. Autoprocessing between NS2 and NS3 is mediated by the NS2 cysteine protease catalytic domain and regulated by the NS3 N-terminal domain. In terms of processing, phosphorylated by host PKC and PKA. Post-translationally, ubiquitinated; mediated by UBE3A and leading to core protein subsequent proteasomal degradation. Highly N-glycosylated. In terms of processing, palmitoylation is required for NS2/3 autoprocessing and E2 recruitment to membranes. Post-translationally, palmitoylated. This modification may play a role in its polymerization or in protein-protein interactions. Phosphorylated on serines in a basal form termed p56. p58 is a hyperphosphorylated form of p56. p56 and p58 coexist in the cell in roughly equivalent amounts. Hyperphosphorylation is dependent on the presence of NS4A. Host CSNK1A1/CKI-alpha or RPS6KB1 kinases may be responsible for NS5A phosphorylation. In terms of processing, tyrosine phosphorylation is essential for the interaction with host SRC. Post-translationally, the N-terminus is phosphorylated by host PRK2/PKN2.

It localises to the host endoplasmic reticulum membrane. The protein resides in the host mitochondrion membrane. It is found in the virion. The protein localises to the host cytoplasm. Its subcellular location is the host nucleus. It localises to the host lipid droplet. The protein resides in the virion membrane. It is found in the host mitochondrion. The protein localises to the host cell membrane. Its subcellular location is the host perinuclear region. It carries out the reaction Hydrolysis of four peptide bonds in the viral precursor polyprotein, commonly with Asp or Glu in the P6 position, Cys or Thr in P1 and Ser or Ala in P1'.. The catalysed reaction is a ribonucleoside 5'-triphosphate + H2O = a ribonucleoside 5'-diphosphate + phosphate + H(+). The enzyme catalyses ATP + H2O = ADP + phosphate + H(+). It catalyses the reaction RNA(n) + a ribonucleoside 5'-triphosphate = RNA(n+1) + diphosphate. With respect to regulation, inhibited by the antiviral drug hexamethylene amiloride. Inhibition by amantadine appears to be genotype-dependent. Also inhibited by long-alkyl-chain iminosugar derivatives. Its activity is regulated as follows. Activity is up-regulated by PRK2/PKN2-mediated phosphorylation. Functionally, packages viral RNA to form a viral nucleocapsid, and promotes virion budding. Participates in the viral particle production as a result of its interaction with the non-structural protein 5A. Binds RNA and may function as a RNA chaperone to induce the RNA structural rearrangements taking place during virus replication. Modulates viral translation initiation by interacting with viral IRES and 40S ribosomal subunit. Affects various cell signaling pathways, host immunity and lipid metabolism. Prevents the establishment of cellular antiviral state by blocking the interferon-alpha/beta (IFN-alpha/beta) and IFN-gamma signaling pathways and by blocking the formation of phosphorylated STAT1 and promoting ubiquitin-mediated proteasome-dependent degradation of STAT1. Activates STAT3 leading to cellular transformation. Regulates the activity of cellular genes, including c-myc and c-fos. May repress the promoter of p53, and sequester CREB3 and SP110 isoform 3/Sp110b in the cytoplasm. Represses cell cycle negative regulating factor CDKN1A, thereby interrupting an important check point of normal cell cycle regulation. Targets transcription factors involved in the regulation of inflammatory responses and in the immune response: suppresses TNF-induced NF-kappa-B activation, and activates AP-1. Binds to dendritic cells (DCs) via C1QR1, resulting in down-regulation of T-lymphocytes proliferation. Alters lipid metabolism by interacting with hepatocellular proteins involved in lipid accumulation and storage. Induces up-regulation of FAS promoter activity, and thereby contributes to the increased triglyceride accumulation in hepatocytes (steatosis). Forms a heterodimer with envelope glycoprotein E2, which mediates virus attachment to the host cell, virion internalization through clathrin-dependent endocytosis and fusion with host membrane. Fusion with the host cell is most likely mediated by both E1 and E2, through conformational rearrangements of the heterodimer required for fusion rather than a classical class II fusion mechanism. E1/E2 heterodimer binds host apolipoproteins such as APOB and ApoE thereby forming a lipo-viro-particle (LVP). APOE associated to the LVP allows the initial virus attachment to cell surface receptors such as the heparan sulfate proteoglycans (HSPGs), syndecan-1 (SDC1), syndecan-1 (SDC2), the low-density lipoprotein receptor (LDLR) and scavenger receptor class B type I (SCARB1). The cholesterol transfer activity of SCARB1 allows E2 exposure and binding of E2 to SCARB1 and the tetraspanin CD81. E1/E2 heterodimer binding on CD81 activates the epithelial growth factor receptor (EGFR) signaling pathway. Diffusion of the complex E1-E2-EGFR-SCARB1-CD81 to the cell lateral membrane allows further interaction with Claudin 1 (CLDN1) and occludin (OCLN) to finally trigger HCV entry. In terms of biological role, forms a heterodimer with envelope glycoprotein E1, which mediates virus attachment to the host cell, virion internalization through clathrin-dependent endocytosis and fusion with host membrane. Fusion with the host cell is most likely mediated by both E1 and E2, through conformational rearrangements of the heterodimer required for fusion rather than a classical class II fusion mechanism. The interaction between envelope glycoprotein E2 and host apolipoprotein E/APOE allows the proper assembly, maturation and infectivity of the viral particles. This interaction is probably promoted via the up-regulation of cellular autophagy by the virus. E1/E2 heterodimer binds host apolipoproteins such as APOB and APOE thereby forming a lipo-viro-particle (LVP). APOE associated to the LVP allows the initial virus attachment to cell surface receptors such as the heparan sulfate proteoglycans (HSPGs), syndecan-1 (SDC1), syndecan-1 (SDC2), the low-density lipoprotein receptor (LDLR) and scavenger receptor class B type I (SCARB1). The cholesterol transfer activity of SCARB1 allows E2 exposure and binding of E2 to SCARB1 and the tetraspanin CD81. E1/E2 heterodimer binding on CD81 activates the epithelial growth factor receptor (EGFR) signaling pathway. Diffusion of the complex E1-E2-EGFR-SCARB1-CD81 to the cell lateral membrane allows further interaction with Claudin 1 (CLDN1) and occludin (OCLN) to finally trigger HCV entry. Inhibits host EIF2AK2/PKR activation, preventing the establishment of an antiviral state. Viral ligand for CD209/DC-SIGN and CLEC4M/DC-SIGNR, which are respectively found on dendritic cells (DCs), and on liver sinusoidal endothelial cells and macrophage-like cells of lymph node sinuses. These interactions allow the capture of circulating HCV particles by these cells and subsequent facilitated transmission to permissive cells such as hepatocytes and lymphocyte subpopulations. The interaction between E2 and host amino acid transporter complex formed by SLC3A2 and SLC7A5/LAT1 may facilitate viral entry into host cell. Its function is as follows. Ion channel protein that acts as a viroporin and plays an essential role in the assembly, envelopment and secretion of viral particles. Regulates the host cell secretory pathway, which induces the intracellular retention of viral glycoproteins and favors assembly of viral particles. Creates a pore in acidic organelles and releases Ca(2+) and H(+) in the cytoplasm of infected cells, leading to a productive viral infection. High levels of cytoplasmic Ca(2+) may trigger membrane trafficking and transport of viral ER-associated proteins to viroplasms, sites of viral genome replication. This ionic imbalance induces the assembly of the inflammasome complex, which triggers the maturation of pro-IL-1beta into IL-1beta through the action of caspase-1. Targets also host mitochondria and induces mitochondrial depolarization. In addition of its role as a viroporin, acts as a lipid raft adhesion factor. Functionally, cysteine protease required for the proteolytic auto-cleavage between the non-structural proteins NS2 and NS3. The N-terminus of NS3 is required for the function of NS2 protease (active region NS2-3). Promotes the initiation of viral particle assembly by mediating the interaction between structural and non-structural proteins. Displays three enzymatic activities: serine protease with a chymotrypsin-like fold, NTPase and RNA helicase. NS3 serine protease, in association with NS4A, is responsible for the cleavages of NS3-NS4A, NS4A-NS4B, NS4B-NS5A and NS5A-NS5B. The NS3/NS4A complex prevents phosphorylation of host IRF3, thus preventing the establishment of dsRNA induced antiviral state. The NS3/NS4A complex induces host amino acid transporter component SLC3A2, thus contributing to HCV propagation. NS3 RNA helicase binds to RNA and unwinds both dsDNA and dsRNA in the 3' to 5' direction, and likely resolves RNA complicated stable secondary structures in the template strand. Binds a single ATP and catalyzes the unzipping of a single base pair of dsRNA. Inhibits host antiviral proteins TBK1 and IRF3 thereby preventing the establishment of an antiviral state. Cleaves host MAVS/CARDIF thereby preventing the establishment of an antiviral state. Cleaves host TICAM1/TRIF, thereby disrupting TLR3 signaling and preventing the establishment of an antiviral state. In terms of biological role, induces a specific membrane alteration that serves as a scaffold for the virus replication complex. This membrane alteration gives rise to the so-called ER-derived membranous web that contains the replication complex. NS4B self-interaction contributes to its function in membranous web formation. Promotes host TRIF protein degradation in a CASP8-dependent manner thereby inhibiting host TLR3-mediated interferon signaling. Disrupts the interaction between STING and TBK1 contributing to the inhibition of interferon signaling. Its function is as follows. Phosphorylated protein that is indispensable for viral replication and assembly. Both hypo- and hyperphosphorylated states are required for the viral life cycle. The hyperphosphorylated form of NS5A is an inhibitor of viral replication. Involved in RNA-binding and especially in binding to the viral genome. Zinc is essential for RNA-binding. Participates in the viral particle production as a result of its interaction with the mature viral core protein. Its interaction with host VAPB may target the viral replication complex to vesicles. Down-regulates viral IRES translation initiation. Mediates interferon resistance, presumably by interacting with and inhibiting host EIF2AK2/PKR. Prevents BIN1-induced apoptosis. Acts as a transcriptional activator of some host genes important for viral replication when localized in the nucleus. Via the interaction with host PACSIN2, modulates lipid droplet formation in order to promote virion assembly. Modulates TNFRSF21/DR6 signaling pathway for viral propagation. Functionally, RNA-dependent RNA polymerase that performs primer-template recognition and RNA synthesis during viral replication. Initiates RNA transcription/replication at a flavin adenine dinucleotide (FAD), resulting in a 5'- FAD cap on viral RNAs. In this way, recognition of viral 5' RNA by host pattern recognition receptors can be bypassed, thereby evading activation of antiviral pathways. The sequence is that of Genome polyprotein from Hepatitis C virus genotype 5a (isolate EUH1480) (HCV).